The following is a 217-amino-acid chain: Thiopurine S-methyltransferase (217 aa).

4 residues coordinate S-adenosyl-L-methionine: W10, L45, E66, and R123.

Belongs to the class I-like SAM-binding methyltransferase superfamily. TPMT family.

Its subcellular location is the cytoplasm. The catalysed reaction is S-adenosyl-L-methionine + a thiopurine = S-adenosyl-L-homocysteine + a thiopurine S-methylether.. The protein is Thiopurine S-methyltransferase of Pseudomonas fluorescens (strain Pf0-1).